A 783-amino-acid chain; its full sequence is Lon protease (783 aa).

Positions 16–210 (LPLLASRGVV…KLLEIIKDEI (195 aa)) constitute a Lon N-terminal domain. 361–368 (GAPGVGKT) contributes to the ATP binding site. A Lon proteolytic domain is found at 597 to 778 (KDRVGVATGM…DQVLDLILGG (182 aa)). Residues Ser-684 and Lys-727 contribute to the active site.

It belongs to the peptidase S16 family. As to quaternary structure, homohexamer. Organized in a ring with a central cavity.

The protein localises to the cytoplasm. The catalysed reaction is Hydrolysis of proteins in presence of ATP.. Its function is as follows. ATP-dependent serine protease that mediates the selective degradation of mutant and abnormal proteins as well as certain short-lived regulatory proteins. Required for cellular homeostasis and for survival from DNA damage and developmental changes induced by stress. Degrades polypeptides processively to yield small peptide fragments that are 5 to 10 amino acids long. Binds to DNA in a double-stranded, site-specific manner. The polypeptide is Lon protease (Halothermothrix orenii (strain H 168 / OCM 544 / DSM 9562)).